The following is a 78-amino-acid chain: 4-methyl-3-hydroxyanthranilic acid carrier protein (78 aa).

S33 bears the O-(pantetheine 4'-phosphoryl)serine mark.

It belongs to the acyl carrier protein (ACP) family. 4'-phosphopantetheine is transferred from CoA to a specific serine of the apo-form of this carrier protein.

The protein operates within antibiotic biosynthesis. Involved in the biosynthesis of actinomycin. Acts as a carrier in the transfer and thioesterification of 4-methyl-3-hydroxyanthranilic acid (4-MHA). The protein is 4-methyl-3-hydroxyanthranilic acid carrier protein of Streptomyces anulatus (Streptomyces chrysomallus).